We begin with the raw amino-acid sequence, 437 residues long: Cytochrome c biogenesis protein Ccs1 (437 aa).

The next 3 membrane-spanning stretches (helical) occupy residues 23–43 (LQFS…GTII), 82–102 (TWWF…CSLS), and 168–188 (LAPI…VLGL).

Belongs to the Ccs1/CcsB family. As to quaternary structure, may interact with CcsA.

It localises to the plastid. It is found in the chloroplast thylakoid membrane. Required during biogenesis of c-type cytochromes (cytochrome c6 and cytochrome f) at the step of heme attachment. The protein is Cytochrome c biogenesis protein Ccs1 of Porphyra purpurea (Red seaweed).